The following is a 71-amino-acid chain: Small ribosomal subunit protein bS21 (71 aa).

It belongs to the bacterial ribosomal protein bS21 family.

This is Small ribosomal subunit protein bS21 from Vesicomyosocius okutanii subsp. Calyptogena okutanii (strain HA).